A 147-amino-acid chain; its full sequence is Transcriptional repressor NrdR (147 aa).

A zinc finger spans residues 3-34 (CLFCRSDDTKVIDSRTSEDGISIRRRRECQLC). The 91-residue stretch at 46-136 (LTVIKRNGTS…VYQDFDSLED (91 aa)) folds into the ATP-cone domain.

The protein belongs to the NrdR family. Requires Zn(2+) as cofactor.

Its function is as follows. Negatively regulates transcription of bacterial ribonucleotide reductase nrd genes and operons by binding to NrdR-boxes. The polypeptide is Transcriptional repressor NrdR (Tropheryma whipplei (strain TW08/27) (Whipple's bacillus)).